We begin with the raw amino-acid sequence, 664 residues long: Chaperone protein DnaK (664 aa).

A Phosphothreonine; by autocatalysis modification is found at T201. Disordered stretches follow at residues 516–538 and 578–664; these read DAEK…NEAD and APVE…KPND. Residues 578–592 show a composition bias toward basic and acidic residues; that stretch reads APVEKIKDASEELSR. Low complexity-rich tracts occupy residues 600-617 and 638-649; these read AMQS…ANAQ and AGNSASSNSNNE.

Belongs to the heat shock protein 70 family.

Functionally, acts as a chaperone. In Chlamydia caviae (strain ATCC VR-813 / DSM 19441 / 03DC25 / GPIC) (Chlamydophila caviae), this protein is Chaperone protein DnaK.